A 331-amino-acid polypeptide reads, in one-letter code: Adenosine deaminase (331 aa).

His12 and His14 together coordinate Zn(2+). Residues His14, Asp16, and Gly170 each contribute to the substrate site. His197 serves as a coordination point for Zn(2+). Glu200 (proton donor) is an active-site residue. Asp278 is a binding site for Zn(2+). Residue Asp279 coordinates substrate.

Belongs to the metallo-dependent hydrolases superfamily. Adenosine and AMP deaminases family. Adenosine deaminase subfamily. Zn(2+) is required as a cofactor.

It carries out the reaction adenosine + H2O + H(+) = inosine + NH4(+). It catalyses the reaction 2'-deoxyadenosine + H2O + H(+) = 2'-deoxyinosine + NH4(+). Catalyzes the hydrolytic deamination of adenosine and 2-deoxyadenosine. The protein is Adenosine deaminase of Shewanella putrefaciens (strain CN-32 / ATCC BAA-453).